The sequence spans 242 residues: Uridylate kinase (242 aa).

An ATP-binding site is contributed by 13-16 (KLSG). G55 contacts UMP. 2 residues coordinate ATP: G56 and R60. Residues D75 and 136–143 (TGNPFFTT) contribute to the UMP site. 3 residues coordinate ATP: T163, Y169, and D172.

Belongs to the UMP kinase family. In terms of assembly, homohexamer.

The protein resides in the cytoplasm. The enzyme catalyses UMP + ATP = UDP + ADP. It participates in pyrimidine metabolism; CTP biosynthesis via de novo pathway; UDP from UMP (UMPK route): step 1/1. Inhibited by UTP. Its function is as follows. Catalyzes the reversible phosphorylation of UMP to UDP. The protein is Uridylate kinase of Zymomonas mobilis subsp. mobilis (strain ATCC 31821 / ZM4 / CP4).